The sequence spans 272 residues: MKGAGSASFLLTLLSTITRTSAHGYVSNIVINGVSYRGWLPSQDPYSPSPPIGVGWETPNLSNGFVTPEEASTDAIICHKEATPARGHATVAAGDKIYIQWQPIPWPDSHHGPVLDYLAPCNGDCQTVDKNSLEFFKISGVGLIDGSSPPGYWADDELIENGNGWLVQIPADIKPGNYVLRHEIIALHGAGSQNGAQLYPQCFNLKITGSGTAEPAGVPGPELYSPTDPGILINIYQVLTDYVVPGPTPIPQAVEVAQSSSVITATGTPTPV.

The N-terminal stretch at 1 to 22 (MKGAGSASFLLTLLSTITRTSA) is a signal peptide. Residue His23 coordinates Cu(2+). Asn60 carries an N-linked (GlcNAc...) asparagine glycan. 2 disulfides stabilise this stretch: Cys78/Cys202 and Cys121/Cys125. A Cu(2+)-binding site is contributed by His110. Residues His188 and Gln197 each coordinate O2. Tyr199 contacts Cu(2+).

Belongs to the polysaccharide monooxygenase AA9 family. Cu(2+) is required as a cofactor.

Its subcellular location is the secreted. The catalysed reaction is [(1-&gt;4)-beta-D-glucosyl]n+m + reduced acceptor + O2 = 4-dehydro-beta-D-glucosyl-[(1-&gt;4)-beta-D-glucosyl]n-1 + [(1-&gt;4)-beta-D-glucosyl]m + acceptor + H2O.. Functionally, lytic polysaccharide monooxygenase (LPMO) that depolymerizes crystalline and amorphous polysaccharides via the oxidation of scissile alpha- or beta-(1-4)-glycosidic bonds, yielding C1 or C4 oxidation products. Catalysis by LPMOs requires the reduction of the active-site copper from Cu(II) to Cu(I) by a reducing agent and H(2)O(2) or O(2) as a cosubstrate. Acts preferentially on crystalline regions of cellulose such as highly crystalline algae cellulose. The chain is AA9 family lytic polysaccharide monooxygenase G from Emericella nidulans (strain FGSC A4 / ATCC 38163 / CBS 112.46 / NRRL 194 / M139) (Aspergillus nidulans).